The chain runs to 347 residues: Dihydroorotase (347 aa).

Positions 14 and 16 each coordinate Zn(2+). Substrate-binding positions include 16–18 (HLR) and Asn-42. Residues Lys-100, His-137, and His-175 each coordinate Zn(2+). Lys-100 is subject to N6-carboxylysine. His-137 is a binding site for substrate. Leu-220 is a binding site for substrate. Asp-248 serves as a coordination point for Zn(2+). Residue Asp-248 is part of the active site. Positions 252 and 264 each coordinate substrate.

This sequence belongs to the metallo-dependent hydrolases superfamily. DHOase family. Class II DHOase subfamily. In terms of assembly, homodimer. It depends on Zn(2+) as a cofactor.

It carries out the reaction (S)-dihydroorotate + H2O = N-carbamoyl-L-aspartate + H(+). Its pathway is pyrimidine metabolism; UMP biosynthesis via de novo pathway; (S)-dihydroorotate from bicarbonate: step 3/3. In terms of biological role, catalyzes the reversible cyclization of carbamoyl aspartate to dihydroorotate. The chain is Dihydroorotase from Stutzerimonas stutzeri (strain A1501) (Pseudomonas stutzeri).